A 624-amino-acid polypeptide reads, in one-letter code: Pentatricopeptide repeat-containing protein At4g31070, mitochondrial (624 aa).

The N-terminal 15 residues, 1–15 (MRWVKLGRRVIMSRA), are a transit peptide targeting the mitochondrion. PPR repeat units follow at residues 56-91 (FTAILPSVIKACAFQQEPFLLGAQLHCLCLKAGADC), 92-122 (DTVVSNSLISMYAKFSRKYAVRKVFDEMLHR), 123-157 (DTVSYCSIINSCCQDGLLYEAMKLIKEMYFYGFIP), 158-192 (KSELVASLLALCTRMGSSSKVARMFHALVLVDERM), 195-225 (SVLLSTALVDMYLKFDDHAAAFHVFDQMEVK), 226-260 (NEVSWTAMISGCVANQNYEMGVDLFRAMQRENLRP), 261-296 (NRVTLLSVLPACVELNYGSSLVKEIHGFSFRHGCHA), 297-327 (DERLTAAFMTMYCRCGNVSLSRVLFETSKVR), 328-362 (DVVMWSSMISGYAETGDCSEVMNLLNQMRKEGIEA), 363-397 (NSVTLLAIVSACTNSTLLSFASTVHSQILKCGFMS), 398-428 (HILLGNALIDMYAKCGSLSAAREVFYELTEK), 429-463 (DLVSWSSMINAYGLHGHGSEALEIFKGMIKGGHEV), 464-498 (DDMAFLAILSACNHAGLVEEAQTIFTQAGKYHMPV), and 499-529 (TLEHYACYINLLGRFGKIDDAFEVTINMPMK). The segment at 534–610 (IWSSLLSACE…CYGFSKIEPE (77 aa)) is type E motif.

Belongs to the PPR family. PCMP-E subfamily.

The protein localises to the mitochondrion. The polypeptide is Pentatricopeptide repeat-containing protein At4g31070, mitochondrial (PCMP-E7) (Arabidopsis thaliana (Mouse-ear cress)).